A 654-amino-acid polypeptide reads, in one-letter code: RNA polymerase I-specific transcription initiation factor tif-1A (654 aa).

The disordered stretch occupies residues 1-37 (MKRSTANAPKLSPKHESESDPKKVKLEEEAKPTVNQA). Over residues 13-31 (PKHESESDPKKVKLEEEAK) the composition is skewed to basic and acidic residues.

The protein belongs to the RRN3 family.

The protein resides in the nucleus. It localises to the nucleolus. Functionally, required for efficient transcription initiation by RNA polymerase I (Pol I). This Caenorhabditis elegans protein is RNA polymerase I-specific transcription initiation factor tif-1A.